Reading from the N-terminus, the 564-residue chain is Arginine--tRNA ligase (564 aa).

A 'HIGH' region motif is present at residues Pro122 to His132.

Belongs to the class-I aminoacyl-tRNA synthetase family. In terms of assembly, monomer.

Its subcellular location is the cytoplasm. The catalysed reaction is tRNA(Arg) + L-arginine + ATP = L-arginyl-tRNA(Arg) + AMP + diphosphate. The chain is Arginine--tRNA ligase from Lactococcus lactis subsp. lactis (strain IL1403) (Streptococcus lactis).